Here is a 40-residue protein sequence, read N- to C-terminus: Alpha-conotoxin GIC (40 aa).

A propeptide spanning residues 1-20 is cleaved from the precursor; sequence SDGRNDAAKAFDLISSTVKK. 2 disulfides stabilise this stretch: Cys-22/Cys-28 and Cys-23/Cys-36. The tract at residues 24–26 is ser-Xaa-Pro motif, crucial for potent interaction with nAChR; the sequence is SHP. Cys-36 is subject to Cysteine amide.

In terms of tissue distribution, expressed by the venom duct.

It is found in the secreted. Alpha-conotoxins bind to the nicotinic acetylcholine receptors (nAChR) and inhibit them. This toxin reversibly blocks neuronal nAChRs (alpha-3/beta-2 = alpha-6 or -3/beta-2 or -3 &gt; alpha-3/beta-4 = alpha-4/beta-2). This is Alpha-conotoxin GIC from Conus geographus (Geography cone).